Reading from the N-terminus, the 264-residue chain is Exodeoxyribonuclease YycJ (264 aa).

H58, H60, D62, H63, and D145 together coordinate a divalent metal cation.

The protein belongs to the metallo-beta-lactamase superfamily. The cofactor is Fe(2+). Requires Zn(2+) as cofactor. Mn(2+) serves as cofactor.

In terms of biological role, 5'-&gt;3' double-stranded DNA exonuclease. May play a role in mutation mismatch repair (MMR). Required for accurate coordination of cell division with DNA replication. May play a role in cell wall metabolism. This is Exodeoxyribonuclease YycJ from Bacillus anthracis.